The primary structure comprises 161 residues: Troponin C, slow skeletal and cardiac muscles (161 aa).

Residue methionine 1 is modified to N-acetylmethionine. EF-hand domains are found at residues 16–51 (QKNEFKAAFDIFVLGAEDGCISTKELGKVMRMLGQN), 52–87 (PTPEELQEMIDEVDEDGSGTVDFDEFLVMMVRCMKD), 92–127 (KTEEELSDLFRMFDKNADGYIDLEELKIMLQATGET), and 128–161 (ITEDDIEELMKDGDKNNDGRIDYDEFLEFMKGVE). Aspartate 65, aspartate 67, serine 69, threonine 71, glutamate 76, aspartate 105, asparagine 107, aspartate 109, tyrosine 111, glutamate 116, aspartate 141, asparagine 143, aspartate 145, arginine 147, and glutamate 152 together coordinate Ca(2+).

It belongs to the troponin C family.

Its function is as follows. Troponin is the central regulatory protein of striated muscle contraction. Tn consists of three components: Tn-I which is the inhibitor of actomyosin ATPase, Tn-T which contains the binding site for tropomyosin and Tn-C. The binding of calcium to Tn-C abolishes the inhibitory action of Tn on actin filaments. This chain is Troponin C, slow skeletal and cardiac muscles (TNNC1), found in Gallus gallus (Chicken).